Here is a 303-residue protein sequence, read N- to C-terminus: 5-dehydro-4-deoxyglucarate dehydratase (303 aa).

This sequence belongs to the DapA family.

The catalysed reaction is 5-dehydro-4-deoxy-D-glucarate + H(+) = 2,5-dioxopentanoate + CO2 + H2O. It participates in carbohydrate acid metabolism; D-glucarate degradation; 2,5-dioxopentanoate from D-glucarate: step 2/2. The sequence is that of 5-dehydro-4-deoxyglucarate dehydratase from Pseudomonas putida (Arthrobacter siderocapsulatus).